The primary structure comprises 274 residues: Penicillin-insensitive murein endopeptidase (274 aa).

The first 19 residues, 1–19 (MNKTAIALLALLASSVSLA), serve as a signal peptide directing secretion. 3 disulfide bridges follow: cysteine 44–cysteine 265, cysteine 187–cysteine 235, and cysteine 216–cysteine 223. Zn(2+) is bound by residues histidine 110, histidine 113, aspartate 120, aspartate 147, histidine 150, and histidine 211. Positions 227–274 (PLPPPGDGCGAELQSWFEPPKPGTTKPEKKTPPPLPPSCQALLDEHVI) are disordered.

The protein belongs to the peptidase M74 family. In terms of assembly, dimer. Zn(2+) is required as a cofactor.

The protein localises to the periplasm. Functionally, murein endopeptidase that cleaves the D-alanyl-meso-2,6-diamino-pimelyl amide bond that connects peptidoglycan strands. Likely plays a role in the removal of murein from the sacculus. The protein is Penicillin-insensitive murein endopeptidase of Shigella dysenteriae serotype 1 (strain Sd197).